Here is a 257-residue protein sequence, read N- to C-terminus: Phosphonates import ATP-binding protein PhnC (257 aa).

One can recognise an ABC transporter domain in the interval I7 to D251. G40–S47 contacts ATP.

This sequence belongs to the ABC transporter superfamily. Phosphonates importer (TC 3.A.1.9.1) family. As to quaternary structure, the complex is composed of two ATP-binding proteins (PhnC), two transmembrane proteins (PhnE) and a solute-binding protein (PhnD).

The protein resides in the cell membrane. The enzyme catalyses phosphonate(out) + ATP + H2O = phosphonate(in) + ADP + phosphate + H(+). Functionally, part of the ABC transporter complex PhnCDE involved in phosphonates import. Responsible for energy coupling to the transport system. The chain is Phosphonates import ATP-binding protein PhnC from Lactobacillus acidophilus (strain ATCC 700396 / NCK56 / N2 / NCFM).